The chain runs to 369 residues: MTLWFVFALMTVAAIFAVLWPLGRSARAQNQGSEVVVYKDQLTEIERDLASGLIAAPEAEAARVEISRRLLAAAGSEPVSEPKSSLKWRRAAAVLALVGLPLVAIGVYMPLGSPRLQDFPLAQRERGSGSGMAGSLENLVVQVEQHLEKNPTDGRGWNVLAPVLERLGRFDDAVRAYRNSITYNGESPERRSDLGEAISAAAGGVVTAEAKTEFERAHALNADDPKANYFLGLAAEQDGRKDDAATIWRALLAKAPADAPWRPLVQSSLVRVGGGTMPALSDETIAASKDMSEGDRGAMVRGMVERLATRLKQNSDDVEGWLRLVRAYLVMGDRDKAVGASSDARQAVAKDTERLRQLNEGLKTLGLDG.

Helical transmembrane passes span 7–23 (FALM…WPLG) and 91–111 (AAAV…YMPL). The Periplasmic portion of the chain corresponds to 112–369 (GSPRLQDFPL…EGLKTLGLDG (258 aa)).

The protein resides in the cell inner membrane. Functionally, required for the biogenesis of c-type cytochromes. Possible subunit of a heme lyase. The chain is Cytochrome c-type biogenesis protein CycH (cycH) from Bradyrhizobium diazoefficiens (strain JCM 10833 / BCRC 13528 / IAM 13628 / NBRC 14792 / USDA 110).